Here is a 373-residue protein sequence, read N- to C-terminus: Queuine tRNA-ribosyltransferase (373 aa).

The Proton acceptor role is filled by D89. Residues D89–F93, D143, Q185, and G212 contribute to the substrate site. The RNA binding stretch occupies residues G243 to D249. D262 acts as the Nucleophile in catalysis. The segment at T267–R271 is RNA binding; important for wobble base 34 recognition. Residues C300, C302, C305, and H331 each contribute to the Zn(2+) site.

The protein belongs to the queuine tRNA-ribosyltransferase family. Homodimer. Within each dimer, one monomer is responsible for RNA recognition and catalysis, while the other monomer binds to the replacement base PreQ1. Zn(2+) is required as a cofactor.

It catalyses the reaction 7-aminomethyl-7-carbaguanine + guanosine(34) in tRNA = 7-aminomethyl-7-carbaguanosine(34) in tRNA + guanine. The protein operates within tRNA modification; tRNA-queuosine biosynthesis. Its function is as follows. Catalyzes the base-exchange of a guanine (G) residue with the queuine precursor 7-aminomethyl-7-deazaguanine (PreQ1) at position 34 (anticodon wobble position) in tRNAs with GU(N) anticodons (tRNA-Asp, -Asn, -His and -Tyr). Catalysis occurs through a double-displacement mechanism. The nucleophile active site attacks the C1' of nucleotide 34 to detach the guanine base from the RNA, forming a covalent enzyme-RNA intermediate. The proton acceptor active site deprotonates the incoming PreQ1, allowing a nucleophilic attack on the C1' of the ribose to form the product. After dissociation, two additional enzymatic reactions on the tRNA convert PreQ1 to queuine (Q), resulting in the hypermodified nucleoside queuosine (7-(((4,5-cis-dihydroxy-2-cyclopenten-1-yl)amino)methyl)-7-deazaguanosine). The polypeptide is Queuine tRNA-ribosyltransferase (Marinobacter nauticus (strain ATCC 700491 / DSM 11845 / VT8) (Marinobacter aquaeolei)).